The primary structure comprises 702 residues: Palmitoyltransferase AKR1 (702 aa).

Residues 1 to 40 (MSTDAELQTISGLSVASKSAPSTQTEGVTASGKVESTTNA) show a composition bias toward polar residues. The disordered stretch occupies residues 1 to 51 (MSTDAELQTISGLSVASKSAPSTQTEGVTASGKVESTTNAEEATSDVEEEE). The Cytoplasmic segment spans residues 1–299 (MSTDAELQTI…TTNLLCFFTP (299 aa)). ANK repeat units lie at residues 49–80 (EEENPLVVAARDGNTAEVKRLCESGSYSVLDT), 83–112 (DGVTALHWAAVNNRISTCQYLVEQGAVVDA), 117–147 (LNGTPLHWACRRGLVYIVHYLIQNGADPLRS), 150–179 (QGYNALHLATHSSNVMLLVYLLHQGLPVDC), 183–212 (NGRTALHWAAYQGDALSVDVLLRWGSDVKI), and 216–245 (QGFLPLHWGIVNGSRNSLARLIEEGSDMYA). Helical transmembrane passes span 300–320 (FILILLGLVLCTFCGPIFGII) and 321–341 (LTVATLFGSIKLLKTLVLPSL). Over 342 to 354 (YNGHAALLKSPFQ) the chain is Cytoplasmic. Residues 355–375 (AGIFTGSAFWVTVKYLTSVLP) form a helical membrane-spanning segment. Residues 376-379 (ATFA) lie on the Lumenal side of the membrane. A helical membrane pass occupies residues 380 to 400 (SHPILNFFFASIFGLAMYCFF). Over 401–479 (RCMSMDPGYI…WNAIGVRNHR (79 aa)) the chain is Cytoplasmic. The DHHC domain occupies 436–486 (HFCFVTYVRKPLRSKFCRQSKRVVARFDHFCPWVWNAIGVRNHRMFVLYVL). Residue Cys466 is the S-palmitoyl cysteine intermediate of the active site. A helical transmembrane segment spans residues 480–500 (MFVLYVLFLQIGIPLWLALNS). Topologically, residues 501 to 518 (AYFGELLEIKRWDPLEFY) are lumenal. Residues 519–539 (LVIWISLQLIWITFLSFVQIF) form a helical membrane-spanning segment. Topologically, residues 540–702 (QICRSLTTSE…GEALLAESQV (163 aa)) are cytoplasmic. Positions 679 to 702 (PNQQQTNNRSTREDGEALLAESQV) are disordered.

Belongs to the DHHC palmitoyltransferase family. AKR/ZDHHC17 subfamily.

The protein resides in the early endosome membrane. It is found in the golgi apparatus membrane. It carries out the reaction L-cysteinyl-[protein] + hexadecanoyl-CoA = S-hexadecanoyl-L-cysteinyl-[protein] + CoA. Palmitoyltransferase specific for casein kinase 1. The protein is Palmitoyltransferase AKR1 (AKR1) of Yarrowia lipolytica (strain CLIB 122 / E 150) (Yeast).